We begin with the raw amino-acid sequence, 1138 residues long: Pesticidal crystal protein Cry7Ab (1138 aa).

This sequence belongs to the delta endotoxin family.

Functionally, promotes colloidosmotic lysis by binding to the midgut epithelial cells of Coleoptera. The sequence is that of Pesticidal crystal protein Cry7Ab (cry7Ab) from Bacillus thuringiensis serovar kumamotoensis.